The primary structure comprises 354 residues: GIVMYTTSSLTTTLGFPKDMWIGRSFIDFVHPRDRNTFASQITSGLAVPKIVNGQSPGNPASTMVCRIRRYRGLTTGFGVKDRVVTFMPFLLKFTFKNVSDEEGKVIYLVIQATQFFSAFRIPSEVVSKAVPFVMRHAANGNLEYIDPESVPYLGYLPQDVTDKDALQLYHPEDLDYLQQVYETIVKEGGVPRTKAYRMMAQNGDYLKLETEWSSFINPWSKRLDFVIGKHHIIEGPSNPDVFQSPDPEKAVAMSEEEKAKEQKYRRDIIRTMNEVLTKPAEVAKQQMTKRCQDLASFMESLMEEQQPKVDEDLRLDIQDPDHSYYQRDSVMLGGISPHHDYNDSKSSTGTPLS.

2 consecutive PAS domains span residues 1–55 (GIVM…VNGQ) and 133–235 (FVMR…HIIE). Residues 318–354 (IQDPDHSYYQRDSVMLGGISPHHDYNDSKSSTGTPLS) are disordered. Over residues 345–354 (SKSSTGTPLS) the composition is skewed to polar residues.

Forms a heterodimer with timeless (TIM); the complex then translocates into the nucleus. In terms of processing, phosphorylated with a circadian rhythmicity.

The protein localises to the nucleus. Involved in the generation of biological rhythms. The biological cycle depends on the rhythmic formation and nuclear localization of the tim-per complex. Light induces the degradation of tim, which promotes elimination of per. Nuclear activity of the heterodimer coordinatively regulates per and tim transcription negative feedback loop. Behaves as a negative element in circadian transcriptional loop. Does not appear to bind DNA, suggesting indirect transcriptional inhibition. This is Period circadian protein (per) from Manduca sexta (Tobacco hawkmoth).